Here is a 431-residue protein sequence, read N- to C-terminus: Glutamate-1-semialdehyde 2,1-aminomutase (431 aa).

Residue K267 is modified to N6-(pyridoxal phosphate)lysine.

The protein belongs to the class-III pyridoxal-phosphate-dependent aminotransferase family. HemL subfamily. Homodimer. Requires pyridoxal 5'-phosphate as cofactor.

It is found in the cytoplasm. The catalysed reaction is (S)-4-amino-5-oxopentanoate = 5-aminolevulinate. The protein operates within porphyrin-containing compound metabolism; protoporphyrin-IX biosynthesis; 5-aminolevulinate from L-glutamyl-tRNA(Glu): step 2/2. In Syntrophomonas wolfei subsp. wolfei (strain DSM 2245B / Goettingen), this protein is Glutamate-1-semialdehyde 2,1-aminomutase.